Here is a 482-residue protein sequence, read N- to C-terminus: UDP-N-acetylmuramate--L-alanine ligase (482 aa).

123 to 129 (GTHGKTT) is an ATP binding site.

It belongs to the MurCDEF family.

Its subcellular location is the cytoplasm. The enzyme catalyses UDP-N-acetyl-alpha-D-muramate + L-alanine + ATP = UDP-N-acetyl-alpha-D-muramoyl-L-alanine + ADP + phosphate + H(+). The protein operates within cell wall biogenesis; peptidoglycan biosynthesis. In terms of biological role, cell wall formation. In Pseudomonas entomophila (strain L48), this protein is UDP-N-acetylmuramate--L-alanine ligase.